Here is a 595-residue protein sequence, read N- to C-terminus: Glycine betaine transporter BetP (595 aa).

Over Met1–Asn59 the chain is Cytoplasmic. The chain crosses the membrane as a helical span at residues Trp60–Phe80. At Lys81–Asn98 the chain is on the periplasmic side. Residues Leu99–Ala119 traverse the membrane as a helical segment. Residues Ser120–Arg137 are Cytoplasmic-facing. Residues Thr138–Gly158 traverse the membrane as a helical segment. Na(+)-binding residues include Ala147, Ala148, and Met150. Ile152 to Gly153 provides a ligand contact to glycine betaine. Residues Thr159–Thr185 are Periplasmic-facing. Residues Met186–Tyr206 form a helical membrane-spanning segment. Residues Ser207–Lys236 lie on the Cytoplasmic side of the membrane. A helical transmembrane segment spans residues Leu237–Gly257. Position 253 (Ser253) interacts with glycine betaine. Over Ala258–Asp276 the chain is Periplasmic. A helical membrane pass occupies residues Trp277 to Ser296. Over Gly297–Gly299 the chain is Cytoplasmic. The chain crosses the membrane as a helical span at residues Lys300–Val323. Positions 306 and 310 each coordinate Na(+). Residues Gly324–Ser365 lie on the Periplasmic side of the membrane. The helical transmembrane segment at Trp366–Ala386 threads the bilayer. Trp373–Trp377 contributes to the glycine betaine binding site. Residues Arg387–Glu396 are Cytoplasmic-facing. Residues Phe397 to Gly417 traverse the membrane as a helical segment. Residues Gly418–Gln451 are Periplasmic-facing. The helical transmembrane segment at Ile452–Met476 threads the bilayer. At Gly477–Lys489 the chain is on the cytoplasmic side. The chain crosses the membrane as a helical span at residues Trp490 to Gly510. At Gly511–Asn520 the chain is on the periplasmic side. Residues Val521–Val541 form a helical membrane-spanning segment. The Cytoplasmic segment spans residues Lys542–Arg595. The interval His570 to Arg595 is disordered. The span at Lys581–Arg595 shows a compositional bias: basic residues.

Belongs to the BCCT transporter (TC 2.A.15) family. In terms of assembly, homotrimer. The monomer can accumulate glycine betaine, but trimerization is required to properly respond to osmotic stress.

The protein localises to the cell inner membrane. With respect to regulation, uptake is activated by hyperosmotic stress. Osmoresponsive activation is triggered by a change in the internal K(+) concentration. In addition, shows a pronounced chill stimulation, at temperatures around 10 degrees Celsius. Chill activation may be influenced by the membrane lipid composition. Uptake is completely abolished by the uncoupler CCCP, and to a different extent by the ionophores valinomycin and nigericin. Functionally, involved in response to osmotic stress. High-affinity glycine betaine-specific uptake system, which couples the uptake of glycine betaine to the symport of two Na(+) ions. Transport is driven both by the Na(+) gradient and by the electrical potential. In addition, functions both as an osmosensor and as an osmoregulator that transduces signal to the catalytic part of the carrier protein, which adapts its activity to the extent of osmotic stress. This Corynebacterium glutamicum (strain ATCC 13032 / DSM 20300 / JCM 1318 / BCRC 11384 / CCUG 27702 / LMG 3730 / NBRC 12168 / NCIMB 10025 / NRRL B-2784 / 534) protein is Glycine betaine transporter BetP.